A 33-amino-acid chain; its full sequence is Photosystem II reaction center protein Psb30 (33 aa).

A helical membrane pass occupies residues 5–25; it reads ILAQLTALAFIVVSGPLVIAL.

Belongs to the Psb30/Ycf12 family. As to quaternary structure, PSII is composed of 1 copy each of membrane proteins PsbA, PsbB, PsbC, PsbD, PsbE, PsbF, PsbH, PsbI, PsbJ, PsbK, PsbL, PsbM, PsbT, PsbX, PsbY, PsbZ, Psb30/Ycf12, peripheral proteins of the oxygen-evolving complex and a large number of cofactors. It forms dimeric complexes.

It is found in the plastid. It localises to the chloroplast thylakoid membrane. A core subunit of photosystem II (PSII), probably helps stabilize the reaction center. In Chaetosphaeridium globosum (Charophycean green alga), this protein is Photosystem II reaction center protein Psb30.